A 524-amino-acid chain; its full sequence is MRLDLLGPVATRIITYLDSLTWVGMALPLFSLCWAISYARGKAYPTVPGAPVYGYNSRFEPSFMLKSRTYTGFYDILSNGYKMLKDVPFVIPRHDTNINILPIKYLDEIRLMPKHILNSHLVLISQMTPKWTWLQPAADSDLVTRVLLTKLNPDLQKYVDITRLELDSAFKSDFPRHDEEWTEVDFQPLIRRVLTRISAKIFLGEPACLNEDWLRIAIGYTAGALEVTKDLHKFPSWTHFLVAPLLPSRRRLRRELDIAMKIVEKQIQLHEQAEKDGLKNYDTLLDWMLDNCSDKESSVEAMTIFQCFIAMASIHTTEFSLANVLFDLCAHPEWFPVLREELDEVIRVHGNIGHRLPAKQWLQKLEKMDSLLAETLRLCPTMLTSIQRLALEKVQLKDGTVIPKGSRLAWASLHHVTDPEVDGTLAAWDPMRNYRKRHSGSGENLTKFVAGQINESTLGFGYGNQACPGRYFAVNEIKMMLARLLLEFEFKFPEGKSRPKVFFIGEIACLDHDATLMMRNVRTC.

Residues 13 to 36 (IITYLDSLTWVGMALPLFSLCWAI) traverse the membrane as a helical segment. N-linked (GlcNAc...) asparagine glycans are attached at residues Asn291, Asn444, and Asn454.

The protein belongs to the cytochrome P450 family. Heme is required as a cofactor.

Its subcellular location is the membrane. It functions in the pathway mycotoxin biosynthesis. Its function is as follows. Cytochrome P450 monooxygenase; part of the core atranone cluster (CAC) which products are predicted to catalyze most or all steps of mycotoxin atranone synthesis, starting from geranylgeranyl pyrophosphate (GGPP). The initial cyclization of GGPP to dolabellane is probably performed by the terpene cyclase ATR13. The Baeyer-Villiger oxidation near the end of the atranone synthesis, which converts atranones D and E to atranones F and G is predicted to be catalyzed by the monooxygenase ATR8. Of the CAC's other predicted gene products, the reducing PKS ATR6 might synthesize a polyketide chain. This polyketide is probably transferred onto the atranone backbone by the polyketide transferase ATR5. Other predicted CAC products include 4 oxygenases (ATR2, ATR3, ATR4, and ATR14), 3 short-chain reductases (ATR7, ATR9, and ATR10), and a methyltransferase (ATR12). These may all be involved in the various steps of atranone biosynthesis, although their specific roles must await experimental determination. The chain is Cytochrome P450 monooxygenase ATR4 from Stachybotrys chlorohalonatus (strain IBT 40285).